A 387-amino-acid chain; its full sequence is Muscleblind-like protein 1 (387 aa).

T6 carries the post-translational modification Phosphothreonine. C3H1-type zinc fingers lie at residues 13–41 (WLTLEVCREFQRGTCSRPDTECKFAHPSK), 47–73 (NGRVIACFDSLKGRCSRENCKYLHPPP), 178–206 (TDRLEVCREYQRGNCNRGENDCRFAHPAD), and 214–240 (DNTVTVCMDYIKGRCSREKCKYFHPPA).

This sequence belongs to the muscleblind family. As to quaternary structure, interacts with DDX1 and YBX1. Interacts with HNRNPH1; the interaction in RNA-independent. Interacts with RBPMS; the interaction allows cooperative assembly of RNA-bound stable cell-specific alternative splicing regulatory complexes.

It localises to the nucleus. The protein resides in the cytoplasm. It is found in the cytoplasmic granule. Functionally, mediates pre-mRNA alternative splicing regulation. Acts either as activator or repressor of splicing on specific pre-mRNA targets. Inhibits cardiac troponin-T (TNNT2) pre-mRNA exon inclusion but induces insulin receptor (IR) pre-mRNA exon inclusion in muscle. Antagonizes the alternative splicing activity pattern of CELF proteins. Regulates the TNNT2 exon 5 skipping through competition with U2AF2. Inhibits the formation of the spliceosome A complex on intron 4 of TNNT2 pre-mRNA. Binds to the stem-loop structure within the polypyrimidine tract of TNNT2 intron 4 during spliceosome assembly. Binds to the 5'-YGCU(U/G)Y-3'consensus sequence. Binds to the IR RNA. Binds to expanded CUG repeat RNA, which folds into a hairpin structure containing GC base pairs and bulged, unpaired U residues. Together with RNA binding proteins RBPMS and RBFOX2, activates vascular smooth muscle cells alternative splicing events. Regulates NCOR2 alternative splicing. This is Muscleblind-like protein 1 from Rattus norvegicus (Rat).